Here is a 445-residue protein sequence, read N- to C-terminus: Phosphoglucosamine mutase (445 aa).

The active-site Phosphoserine intermediate is the serine 102. Mg(2+) contacts are provided by serine 102, aspartate 241, aspartate 243, and aspartate 245. A Phosphoserine modification is found at serine 102.

Belongs to the phosphohexose mutase family. Mg(2+) serves as cofactor. Activated by phosphorylation.

The catalysed reaction is alpha-D-glucosamine 1-phosphate = D-glucosamine 6-phosphate. In terms of biological role, catalyzes the conversion of glucosamine-6-phosphate to glucosamine-1-phosphate. This Acinetobacter baumannii (strain ACICU) protein is Phosphoglucosamine mutase.